The chain runs to 107 residues: UPF0145 protein Sfri_2095 (107 aa).

This sequence belongs to the UPF0145 family.

This chain is UPF0145 protein Sfri_2095, found in Shewanella frigidimarina (strain NCIMB 400).